A 181-amino-acid polypeptide reads, in one-letter code: CASP-like protein UU-1 (181 aa).

The Cytoplasmic segment spans residues 1 to 30; the sequence is MTMELESQEVVVETTTAAAAARAASAAHVR. A helical membrane pass occupies residues 31 to 51; it reads TTVALRLLAFAASLAAAVVVA. The Extracellular portion of the chain corresponds to 52-65; that stretch reads TNRQERWGITVTFK. The chain crosses the membrane as a helical span at residues 66–86; the sequence is MFAVWEAFVAINFACAAYALL. The Cytoplasmic portion of the chain corresponds to 87–107; sequence TAVFVKKLVSKHWLHHMDQFT. The chain crosses the membrane as a helical span at residues 108 to 128; sequence VNLQAASTAGAGAVGSVAMWG. Residues 129 to 147 lie on the Extracellular side of the membrane; that stretch reads NEPSGWYAVCRLYRLYCDR. Residues 148–168 traverse the membrane as a helical segment; sequence GAVSLALAFVAFVAFGVASSL. The Cytoplasmic segment spans residues 169–181; the sequence is SRYPRAPPPPAPR.

This sequence belongs to the Casparian strip membrane proteins (CASP) family. In terms of assembly, homodimer and heterodimers.

Its subcellular location is the cell membrane. The chain is CASP-like protein UU-1 from Sorghum bicolor (Sorghum).